We begin with the raw amino-acid sequence, 514 residues long: 2'-5'-oligoadenylate synthase-like protein (514 aa).

N-acetylalanine is present on Ala2. Ubiquitin-like domains lie at 354–433 and 434–509; these read IHLT…IPSE and IQVF…KGEA.

It belongs to the 2-5A synthase family. As to quaternary structure, specifically interacts with the ligand binding domain of the thyroid receptor (TR). TRIP14 does not require the presence of thyroid hormone for its interaction. Binds MBD1. As to expression, expressed in most tissues, with the highest levels in primary blood Leukocytes and other hematopoietic system tissues, colon, stomach and to some extent in testis.

The protein resides in the nucleus. Its subcellular location is the nucleolus. It is found in the cytoplasm. Its function is as follows. Does not have 2'-5'-OAS activity, but can bind double-stranded RNA. Displays antiviral activity against encephalomyocarditis virus (EMCV) and hepatitis C virus (HCV) via an alternative antiviral pathway independent of RNase L. This is 2'-5'-oligoadenylate synthase-like protein (OASL) from Homo sapiens (Human).